Consider the following 698-residue polypeptide: Long-chain-fatty-acid--CoA ligase 1 (698 aa).

M1 carries the N-acetylmethionine modification. Y9 is subject to 3'-nitrotyrosine. Y84 carries the post-translational modification Phosphotyrosine. O-linked (GlcNAc) serine glycosylation occurs at S135. 2 positions are modified to N6-acetyllysine: K356 and K386. S620 is modified (phosphoserine). N6-acetyllysine is present on K632.

Belongs to the ATP-dependent AMP-binding enzyme family. Mg(2+) is required as a cofactor.

The protein resides in the microsome membrane. It localises to the mitochondrion outer membrane. The protein localises to the peroxisome membrane. Its subcellular location is the endoplasmic reticulum membrane. It catalyses the reaction a long-chain fatty acid + ATP + CoA = a long-chain fatty acyl-CoA + AMP + diphosphate. It carries out the reaction (5Z,8Z,11Z,14Z)-eicosatetraenoate + ATP + CoA = (5Z,8Z,11Z,14Z)-eicosatetraenoyl-CoA + AMP + diphosphate. The catalysed reaction is 3,7,11,15-tetramethylhexadecanoate + ATP + CoA = phytanoyl-CoA + AMP + diphosphate. The enzyme catalyses hexadecanoate + ATP + CoA = hexadecanoyl-CoA + AMP + diphosphate. It catalyses the reaction (E)-hexadec-2-enoate + ATP + CoA = (2E)-hexadecenoyl-CoA + AMP + diphosphate. It carries out the reaction 2,6,10,14-tetramethylpentadecanoate + ATP + CoA = pristanoyl-CoA + AMP + diphosphate. The catalysed reaction is 14,15-epoxy-(5Z,8Z,11Z)-eicosatrienoate + ATP + CoA = 14,15-epoxy-(5Z,8Z,11Z)-eicosatrienoyl-CoA + AMP + diphosphate. The enzyme catalyses 5-hydroxy-(6E,8Z,11Z,14Z)-eicosatetraenoate + ATP + CoA = 5-hydroxy-(6E,8Z,11Z,14Z)-eicosatetraenoyl-CoA + AMP + diphosphate. It catalyses the reaction 12-hydroxy-(5Z,8Z,10E,14Z)-eicosatetraenoate + ATP + CoA = 12-hydroxy-(5Z,8Z,10E,14Z)-eicosatetraenoyl-CoA + AMP + diphosphate. It carries out the reaction 15-hydroxy-(5Z,8Z,11Z,13E)-eicosatetraenoate + ATP + CoA = 15-hydroxy-(5Z,8Z,11Z,13E)-eicosatetraenoyl-CoA + AMP + diphosphate. The catalysed reaction is (9Z)-octadecenoate + ATP + CoA = (9Z)-octadecenoyl-CoA + AMP + diphosphate. With respect to regulation, inhibited at high temperature and by arachidonate. Functionally, catalyzes the conversion of long-chain fatty acids to their active form acyl-CoAs for both synthesis of cellular lipids, and degradation via beta-oxidation. Preferentially uses palmitoleate, oleate and linoleate. Preferentially activates arachidonate than epoxyeicosatrienoic acids (EETs) or hydroxyeicosatrienoic acids (HETEs). The sequence is that of Long-chain-fatty-acid--CoA ligase 1 from Cavia porcellus (Guinea pig).